The chain runs to 169 residues: uncharacterized protein (169 aa).

This is an uncharacterized protein from Mycoplasma pneumoniae (strain ATCC 29342 / M129 / Subtype 1) (Mycoplasmoides pneumoniae).